The primary structure comprises 113 residues: Gonadotropin subunit beta (113 aa).

6 disulfides stabilise this stretch: Cys-6/Cys-54, Cys-20/Cys-69, Cys-23/Cys-107, Cys-31/Cys-85, Cys-35/Cys-87, and Cys-90/Cys-97. An N-linked (GlcNAc...) asparagine glycan is attached at Asn-10.

This sequence belongs to the glycoprotein hormones subunit beta family. As to quaternary structure, heterodimer of an alpha and a beta chain.

The protein localises to the secreted. In terms of biological role, involved in gametogenesis and steroidogenesis. The protein is Gonadotropin subunit beta (cgb) of Muraenesox cinereus (Daggertooth pike conger).